We begin with the raw amino-acid sequence, 267 residues long: 27 kDa core protein (267 aa).

The protein belongs to the chordopoxvirinae D3 family.

The protein resides in the virion. Late protein which is part of a large complex required for early virion morphogenesis. This complex participates in the formation of virosomes and the incorporation of virosomal contents into nascent immature virions. The protein is 27 kDa core protein of Canarypox virus (CNPV).